The following is a 192-amino-acid chain: C-X-C chemokine receptor type 4 (192 aa).

Sulfotyrosine is present on Tyr1. The tract at residues 1–11 (YTEDDLGSGDY) is important for chemokine binding and signaling. The Extracellular segment spans residues 1-28 (YTEDDLGSGDYDSMKEPCFREENAHFNR). Ser8 is a glycosylation site (O-linked (Xyl...) (chondroitin sulfate) serine). A Sulfotyrosine modification is found at Tyr11. A helical membrane pass occupies residues 29–53 (IFLPTVYSIIFLTGIVGNGLVILVM). At 54 to 67 (GYQKKLRSMTDKYR) the chain is on the cytoplasmic side. A helical membrane pass occupies residues 68 to 89 (LHLSVADLLFVLTLPFWAVDAV). The segment at 84–87 (WAVD) is chemokine binding. The Extracellular segment spans residues 90-100 (ANWYFGQFLCK). Cys99 and Cys176 are oxidised to a cystine. Residues 101 to 120 (AVHVIYTVNLYSSVLILAFI) form a helical membrane-spanning segment. The interval 103-107 (HVIYT) is chemokine binding. Over 121–144 (SLDRYLAIVHATNSQRPRKLLAEK) the chain is Cytoplasmic. The Important for signaling signature appears at 123–125 (DRY). The segment at 125–137 (YLAIVHATNSQRP) is involved in dimerization; when bound to chemokine. The helical transmembrane segment at 145–164 (VVYVGVWLPAVLLTIPDLIF) threads the bilayer. The Extracellular portion of the chain corresponds to 165-185 (ADIKEADERYICDRFYPSDLW). A chemokine binding, important for signaling region spans residues 176–180 (CDRFY). The helical transmembrane segment at 186 to 192 (LVVFQFQ) threads the bilayer.

The protein belongs to the G-protein coupled receptor 1 family. Monomer. Can form homodimers. Interacts with CD164. Interacts with ARRB2; the interaction is dependent on the C-terminal phosphorylation of CXCR4 and allows activation of MAPK1 and MAPK3. Interacts with ARR3; the interaction is dependent on the C-terminal phosphorylation of CXCR4 and modulates calcium mobilization. Interacts with RNF113A; the interaction, enhanced by CXCL12, promotes CXCR4 ubiquitination and subsequent degradation. Interacts (via the cytoplasmic C-terminal) with ITCH (via the WW domains I and II); the interaction, enhanced by CXCL12, promotes CXCR4 ubiquitination and leads to its degradation. Interacts with extracellular ubiquitin. Interacts with DBN1; this interaction is enhanced by antigenic stimulation. Following LPS binding, may form a complex with GDF5, HSP90AA1 and HSPA8. In terms of processing, phosphorylated on agonist stimulation. Rapidly phosphorylated on serine and threonine residues in the C-terminal. Ubiquitinated after ligand binding, leading to its degradation. Ubiquitinated by ITCH at the cell membrane on agonist stimulation. The ubiquitin-dependent mechanism, endosomal sorting complex required for transport (ESCRT), then targets CXCR4 for lysosomal degradation. This process is dependent also on prior Ser-/Thr-phosphorylation in the C-terminal of CXCR4. Also binding of ARRB1 to STAM negatively regulates CXCR4 sorting to lysosomes though modulating ubiquitination of SFR5S. Post-translationally, sulfation is required for efficient binding of CXCL12/SDF-1alpha and promotes its dimerization. In terms of processing, O- and N-glycosylated. N-glycosylation can mask coreceptor function. The O-glycosylation chondroitin sulfate attachment does not affect interaction with CXCL12/SDF-1alpha nor its coreceptor activity.

The protein resides in the cell membrane. The protein localises to the cell junction. It localises to the early endosome. Its subcellular location is the late endosome. It is found in the lysosome. In terms of biological role, receptor for the C-X-C chemokine CXCL12/SDF-1 that transduces a signal by increasing intracellular calcium ion levels and enhancing MAPK1/MAPK3 activation. Involved in the AKT signaling cascade. Plays a role in regulation of cell migration, e.g. during wound healing. Acts as a receptor for extracellular ubiquitin; leading to enhanced intracellular calcium ions and reduced cellular cAMP levels. Binds bacterial lipopolysaccharide (LPS) et mediates LPS-induced inflammatory response, including TNF secretion by monocytes. Involved in hematopoiesis and in cardiac ventricular septum formation. Also plays an essential role in vascularization of the gastrointestinal tract, probably by regulating vascular branching and/or remodeling processes in endothelial cells. Involved in cerebellar development. In the CNS, could mediate hippocampal-neuron survival. This Ovis aries (Sheep) protein is C-X-C chemokine receptor type 4 (CXCR4).